Reading from the N-terminus, the 191-residue chain is HTH-type transcriptional regulator YjdC (191 aa).

The HTH tetR-type domain occupies 1–60 (MQREDVLGEALKLLELQGIANTTLEMVAERVDYPLDELRRFWPDKEAILYDALRYLSQQI).

This is HTH-type transcriptional regulator YjdC (yjdC) from Escherichia coli (strain K12).